We begin with the raw amino-acid sequence, 213 residues long: Thymidylate kinase (213 aa).

Gly-10 to Thr-17 lines the ATP pocket.

The protein belongs to the thymidylate kinase family.

The enzyme catalyses dTMP + ATP = dTDP + ADP. Phosphorylation of dTMP to form dTDP in both de novo and salvage pathways of dTTP synthesis. The chain is Thymidylate kinase from Shigella boydii serotype 18 (strain CDC 3083-94 / BS512).